A 153-amino-acid chain; its full sequence is Ribosome maturation factor RimP (153 aa).

Belongs to the RimP family.

It is found in the cytoplasm. In terms of biological role, required for maturation of 30S ribosomal subunits. In Clostridium tetani (strain Massachusetts / E88), this protein is Ribosome maturation factor RimP.